A 276-amino-acid polypeptide reads, in one-letter code: Kallikrein-10 (276 aa).

Residues 1-30 (MRAPHLHLSAASGARALAKLLPLLMAQLWA) form the signal peptide. N-linked (GlcNAc...) asparagine glycosylation occurs at Asn39. Residues 47–274 (AYGSPCARGS…YMSWINKVIR (228 aa)) form the Peptidase S1 domain. Cystine bridges form between Cys52-Cys162, Cys71-Cys87, Cys169-Cys235, Cys201-Cys215, and Cys225-Cys250. Residues His86 and Asp137 each act as charge relay system in the active site. Residue Ser229 is the Charge relay system of the active site.

Belongs to the peptidase S1 family. Kallikrein subfamily. In terms of tissue distribution, expressed in breast, ovary and prostate.

The protein localises to the secreted. Functionally, has a tumor-suppressor role for NES1 in breast and prostate cancer. The chain is Kallikrein-10 (KLK10) from Homo sapiens (Human).